Consider the following 621-residue polypeptide: Chaperone protein DnaK (621 aa).

Thr-202 carries the post-translational modification Phosphothreonine; by autocatalysis. The disordered stretch occupies residues 596–621; sequence SQFAQAAKQNEEKKEEDKKDSEESKN. Residues 604-621 are compositionally biased toward basic and acidic residues; that stretch reads QNEEKKEEDKKDSEESKN.

It belongs to the heat shock protein 70 family.

In terms of biological role, acts as a chaperone. This is Chaperone protein DnaK from Malacoplasma penetrans (strain HF-2) (Mycoplasma penetrans).